The primary structure comprises 200 residues: Pyridoxal 5'-phosphate synthase subunit PdxT (200 aa).

52–54 (GES) contacts L-glutamine. Catalysis depends on cysteine 84, which acts as the Nucleophile. Residues arginine 116 and 145–146 (IR) each bind L-glutamine. Active-site charge relay system residues include histidine 181 and glutamate 183.

The protein belongs to the glutaminase PdxT/SNO family. In the presence of PdxS, forms a dodecamer of heterodimers. Only shows activity in the heterodimer.

It carries out the reaction aldehydo-D-ribose 5-phosphate + D-glyceraldehyde 3-phosphate + L-glutamine = pyridoxal 5'-phosphate + L-glutamate + phosphate + 3 H2O + H(+). The enzyme catalyses L-glutamine + H2O = L-glutamate + NH4(+). The protein operates within cofactor biosynthesis; pyridoxal 5'-phosphate biosynthesis. In terms of biological role, catalyzes the hydrolysis of glutamine to glutamate and ammonia as part of the biosynthesis of pyridoxal 5'-phosphate. The resulting ammonia molecule is channeled to the active site of PdxS. This chain is Pyridoxal 5'-phosphate synthase subunit PdxT, found in Saccharolobus islandicus (strain M.16.27) (Sulfolobus islandicus).